Consider the following 949-residue polypeptide: Sensor histidine kinase RcsC (949 aa).

The Cytoplasmic segment spans residues 1–19; that stretch reads MKYLASFRTTLKASRYMFR. The helical transmembrane segment at 20 to 41 threads the bilayer; the sequence is ALALVLWLLIAFSSVFYIVNAL. Residues 42 to 313 lie on the Periplasmic side of the membrane; sequence HQRESEIRQE…PVDKVLERIR (272 aa). Residues 314-335 traverse the membrane as a helical segment; it reads MVILNAILLNVLAGAALFTLAR. At 336-949 the chain is on the cytoplasmic side; it reads MYERRIFIPA…AERVRKSRES (614 aa). Residues 357 to 425 form the PAS domain; it reads QFNRKIVASA…VLTSNNTNLQ (69 aa). The Histidine kinase domain occupies 476 to 692; the sequence is TVSHELRTPL…QFTVRIPLYG (217 aa). H479 bears the Phosphohistidine; by autocatalysis mark. Residues 705–805 enclose the ABL domain; that stretch reads SGKRCWLAVR…ARIYLIEMES (101 aa). A Response regulatory domain is found at 826-940; that stretch reads MILVVDDHPI…VIKQTLTVYA (115 aa). D875 carries the 4-aspartylphosphate modification.

This sequence belongs to the RcsC family. In terms of assembly, interacts with RcsD. Post-translationally, autophosphorylated. Activation probably requires a transfer of a phosphate group from a His in the transmitter domain to an Asp in the receiver domain.

The protein localises to the cell inner membrane. The enzyme catalyses ATP + protein L-histidine = ADP + protein N-phospho-L-histidine.. In terms of biological role, component of the Rcs signaling system, which controls transcription of numerous genes. RcsC functions as a membrane-associated protein kinase that phosphorylates RcsD in response to environmental signals. The phosphoryl group is then transferred to the response regulator RcsB. Involved in regulation of K30 capsular polysaccharide synthesis. The chain is Sensor histidine kinase RcsC from Escherichia coli.